Here is a 420-residue protein sequence, read N- to C-terminus: Dynein axonemal assembly factor 4 (420 aa).

A CS domain is found at 3 to 87 (LQVSDYSWQQ…KEAAMWETLS (85 aa)). The interval 7 to 103 (DYSWQQTKTA…ETMQRIREKS (97 aa)) is mediates interaction with ESR1 and STUB1. TPR repeat units follow at residues 290–323 (PEWL…NNKM), 324–357 (PLLY…LMPP), and 366–399 (MKAH…DPSN).

Interacts with ZMYND10. Interacts with STUB1. Interacts with ESR1 and ESR2. Interacts with DNAAF2. Interacts with CCT3, CCT4, CCT5 and CCT8. Interacts with DNAAF6/PIH1D3.

Its subcellular location is the nucleus. The protein localises to the cytoplasm. The protein resides in the cell projection. It localises to the neuron projection. It is found in the dynein axonemal particle. Involved in neuronal migration during development of the cerebral neocortex. May regulate the stability and proteasomal degradation of the estrogen receptors that play an important role in neuronal differentiation, survival and plasticity. Axonemal dynein assembly factor required for ciliary motility. This chain is Dynein axonemal assembly factor 4, found in Pongo pygmaeus (Bornean orangutan).